Reading from the N-terminus, the 1140-residue chain is GPI inositol-deacylase (1140 aa).

The disordered stretch occupies residues 1-84 (MHRRSSGSSP…TTWASHDPPR (84 aa)). Over residues 55 to 78 (GKSTPRSRNSSTWRTLSSATTTWA) the composition is skewed to polar residues. Residue Asn63 is glycosylated (N-linked (GlcNAc...) asparagine). Residues 117-137 (SCSILTALTTILACVFLFSIV) traverse the membrane as a helical segment. Residue Ser304 is part of the active site. A helical transmembrane segment spans residues 782–802 (LVMRYRTVFAAFPLLVVSLTL). N-linked (GlcNAc...) asparagine glycosylation is present at Asn862. Helical transmembrane passes span 882 to 902 (AFFWFLVPLFGLICVGVCVLL), 905 to 925 (VALIVLQILSVVYGLWNSKSG), 952 to 972 (VLLVLVSTAIPYQFAYLVACI), 1002 to 1022 (SVFILMLWVLPINILVLLVWA), 1039 to 1059 (VLSIMPFIILVETMTTGSMIP), 1070 to 1090 (SVLLFCIAVYSAVYGVSYAYI), and 1094 to 1114 (LVNILAGWLVSIYFFRSGFSL).

Belongs to the GPI inositol-deacylase family.

It localises to the endoplasmic reticulum membrane. Involved in inositol deacylation of GPI-anchored proteins which plays important roles in the quality control and ER-associated degradation of GPI-anchored proteins. This Emericella nidulans (strain FGSC A4 / ATCC 38163 / CBS 112.46 / NRRL 194 / M139) (Aspergillus nidulans) protein is GPI inositol-deacylase (bst1).